The chain runs to 153 residues: Myoglobin (153 aa).

The 146-residue stretch at 2–147 (GLNDQEWQQV…FRNDMASKYK (146 aa)) folds into the Globin domain. A nitrite-binding site is contributed by H65. H65 is a binding site for O2. H93 is a heme b binding site.

The protein belongs to the globin family. Monomeric.

The protein resides in the cytoplasm. The protein localises to the sarcoplasm. The enzyme catalyses Fe(III)-heme b-[protein] + nitric oxide + H2O = Fe(II)-heme b-[protein] + nitrite + 2 H(+). The catalysed reaction is H2O2 + AH2 = A + 2 H2O. Functionally, monomeric heme protein which primary function is to store oxygen and facilitate its diffusion within muscle tissues. Reversibly binds oxygen through a pentacoordinated heme iron and enables its timely and efficient release as needed during periods of heightened demand. Depending on the oxidative conditions of tissues and cells, and in addition to its ability to bind oxygen, it also has a nitrite reductase activity whereby it regulates the production of bioactive nitric oxide. Under stress conditions, like hypoxia and anoxia, it also protects cells against reactive oxygen species thanks to its pseudoperoxidase activity. This chain is Myoglobin (MB), found in Aptenodytes forsteri (Emperor penguin).